The sequence spans 531 residues: High affinity cysteine transporter (531 aa).

Residues 1 to 54 (MSKVDVKIGADSISSSDEILVPSRLADVTLAFMEENDAAVPEITPEQEKKLKRK) lie on the Cytoplasmic side of the membrane. Residues 55–75 (LFLTIFTFVSAINLLLYMDKA) traverse the membrane as a helical segment. At 76–97 (TLSYDSILGFFEDTGLTQNTYN) the chain is on the lumenal side. The helical transmembrane segment at 98-118 (TVNTLFYVGFAIGQFPGQYLA) threads the bilayer. Over 119-120 (QK) the chain is Cytoplasmic. A helical membrane pass occupies residues 121–141 (LPLGKFLGGLLATWTILIFLS). At 142 to 154 (CTAYNFSGVVALR) the chain is on the lumenal side. Asn-146 carries N-linked (GlcNAc...) asparagine glycosylation. Residues 155–175 (FFLGLTESVVIPILITTMGMF) form a helical membrane-spanning segment. The Cytoplasmic portion of the chain corresponds to 176 to 186 (FDASERAAAQP). Residues 187 to 207 (FFFAACMGSPIPTGFIAYGVL) form a helical membrane-spanning segment. At 208 to 218 (HITNPSISLWK) the chain is on the lumenal side. A helical transmembrane segment spans residues 219-239 (IFTIIIGGLTFIMTVVVILWF). The Cytoplasmic portion of the chain corresponds to 240-285 (PNNPADVKFFSIQERVWIIRRVQASTGSSIEQKVFKKSQFREAMKD). A helical membrane pass occupies residues 286–306 (YITWLFGLFFLLQQLANNLPY). The Lumenal portion of the chain corresponds to 307-324 (QQNLLFEGMGGVDALGST). The helical transmembrane segment at 325–345 (LVSVAGAGFAVVCAFIATLML) threads the bilayer. Over 346-352 (AKWKNIS) the chain is Cytoplasmic. The chain crosses the membrane as a helical span at residues 353–373 (ALTAIFWTLPALVGSIAAAAL). Topologically, residues 374 to 378 (PWDNK) are lumenal. The helical transmembrane segment at 379-399 (IGILANICMAGQIFGIPFIIA) threads the bilayer. The Cytoplasmic segment spans residues 400 to 413 (LSWASSSASGYTKK). The helical transmembrane segment at 414-436 (LTRSSVSLFAMGIANIISPQIWR) threads the bilayer. Topologically, residues 437 to 447 (EKDSPRFLPAW) are lumenal. A helical transmembrane segment spans residues 448–468 (IVQIVLSFSLAPAILLLIHFI). Residues 469–498 (LKRRNNQRLKNYDENLQNYLDRIQLIESEN) adopt a coiled-coil conformation. The Cytoplasmic segment spans residues 469 to 531 (LKRRNNQRLK…LENETFIYPL (63 aa)). Phosphoserine occurs at positions 500 and 501.

It belongs to the major facilitator superfamily. Allantoate permease family.

It is found in the cell membrane. The protein resides in the endoplasmic reticulum membrane. Functionally, high affinity cysteine-specific transporter. Major contributor to cysteine transport when cysteine, at low concentrations, is provided as the sole sulfur source. The polypeptide is High affinity cysteine transporter (YCT1) (Saccharomyces cerevisiae (strain ATCC 204508 / S288c) (Baker's yeast)).